Here is a 523-residue protein sequence, read N- to C-terminus: Mitochondrial distribution and morphology protein 12 (523 aa).

Positions 1–483 (MSFDINWEKL…WPSWICVDMA (483 aa)) constitute an SMP-LTD domain. Basic and acidic residues predominate over residues 108–117 (HEADIINDHD). 4 disordered regions span residues 108–160 (HEAD…QYDE), 178–213 (SASTPKRTSPQRPPLISPRGEVTQQTLSKPKEPFQS), 270–313 (KTKE…NAKN), and 483–523 (AEND…KKED). Acidic residues-rich tracts occupy residues 118–140 (YGDEDDIDDDYDNDSDDYDDDEN) and 148–158 (EDEENEESSQY). Composition is skewed to polar residues over residues 178-187 (SASTPKRTSP) and 277-288 (SGDQQQGKQTGK). Residues 289–313 (ANEKGQKHKHEHEEEQGSDKQNAKN) are compositionally biased toward basic and acidic residues. Residues 483-501 (AENDDEEEDDDDDDHDEDN) are compositionally biased toward acidic residues. Residues 502–523 (EGRGRMRDTGDVDVRDHDKKED) show a composition bias toward basic and acidic residues.

Belongs to the MDM12 family. In terms of assembly, component of the ER-mitochondria encounter structure (ERMES) or MDM complex, composed of MMM1, MDM10, MDM12 and MDM34. An MMM1 homodimer associates with one molecule of MDM12 on each side in a pairwise head-to-tail manner, and the SMP-LTD domains of MMM1 and MDM12 generate a continuous hydrophobic tunnel for phospholipid trafficking.

Its subcellular location is the mitochondrion outer membrane. The protein localises to the endoplasmic reticulum membrane. Component of the ERMES/MDM complex, which serves as a molecular tether to connect the endoplasmic reticulum (ER) and mitochondria. Components of this complex are involved in the control of mitochondrial shape and protein biogenesis, and function in nonvesicular lipid trafficking between the ER and mitochondria. MDM12 is required for the interaction of the ER-resident membrane protein MMM1 and the outer mitochondrial membrane-resident beta-barrel protein MDM10. The MDM12-MMM1 subcomplex functions in the major beta-barrel assembly pathway that is responsible for biogenesis of all mitochondrial outer membrane beta-barrel proteins, and acts in a late step after the SAM complex. The MDM10-MDM12-MMM1 subcomplex further acts in the TOM40-specific pathway after the action of the MDM12-MMM1 complex. Essential for establishing and maintaining the structure of mitochondria and maintenance of mtDNA nucleoids. The protein is Mitochondrial distribution and morphology protein 12 of Lodderomyces elongisporus (strain ATCC 11503 / CBS 2605 / JCM 1781 / NBRC 1676 / NRRL YB-4239) (Yeast).